A 319-amino-acid polypeptide reads, in one-letter code: Shiga-like toxin 2 subunit A (319 aa).

The first 22 residues, 1–22, serve as a signal peptide directing secretion; sequence MKCILFKWVLCLLLGFSSVSYS. The segment at 23 to 272 is A1; sequence REFTIDFSTQ…CHHQGARSVR (250 aa). Residue E189 is part of the active site. C263 and C282 form a disulfide bridge. The interval 273 to 314 is A2; sequence AVNEESQPECQITGDRPVIKINNTLWESNTAAAFLNRKSQFL.

This sequence belongs to the ribosome-inactivating protein family. Shiga-like toxin contains a single A subunit and multiple copies of a B subunit.

It is found in the secreted. The catalysed reaction is Endohydrolysis of the N-glycosidic bond at one specific adenosine on the 28S rRNA.. The A subunit is responsible for inhibiting protein synthesis through the catalytic inactivation of 60S ribosomal subunits. After endocytosis, the A subunit is cleaved by furin in two fragments, A1 and A2: A1 is the catalytically active fragment, and A2 is essential for holotoxin assembly with the B subunits. This chain is Shiga-like toxin 2 subunit A (stxA2), found in Escherichia coli O157:H7 (Bacteriophage 933W).